A 98-amino-acid polypeptide reads, in one-letter code: Co-chaperonin GroES (98 aa).

This sequence belongs to the GroES chaperonin family. As to quaternary structure, heptamer of 7 subunits arranged in a ring. Interacts with the chaperonin GroEL.

The protein localises to the cytoplasm. Functionally, together with the chaperonin GroEL, plays an essential role in assisting protein folding. The GroEL-GroES system forms a nano-cage that allows encapsulation of the non-native substrate proteins and provides a physical environment optimized to promote and accelerate protein folding. GroES binds to the apical surface of the GroEL ring, thereby capping the opening of the GroEL channel. In Allorhizobium ampelinum (strain ATCC BAA-846 / DSM 112012 / S4) (Agrobacterium vitis (strain S4)), this protein is Co-chaperonin GroES.